A 145-amino-acid chain; its full sequence is Superoxide dismutase [Mn/Fe] (145 aa).

Residues histidine 10 and histidine 64 each contribute to the Fe(3+) site. The Mn(2+) site is built by histidine 10 and histidine 64.

It belongs to the iron/manganese superoxide dismutase family. The cofactor is Mn(2+). Requires Fe(3+) as cofactor.

The enzyme catalyses 2 superoxide + 2 H(+) = H2O2 + O2. Functionally, destroys superoxide anion radicals which are normally produced within the cells and which are toxic to biological systems. Catalyzes the dismutation of superoxide anion radicals into O2 and H2O2 by successive reduction and oxidation of the transition metal ion at the active site. In Streptococcus iniae (Streptococcus shiloi), this protein is Superoxide dismutase [Mn/Fe] (sodA).